An 895-amino-acid polypeptide reads, in one-letter code: Microsomal triglyceride transfer protein large subunit (895 aa).

The first 18 residues, 1–18 (MILLAVLFLCFFSSYSAS), serve as a signal peptide directing secretion. Positions 28–659 (LNNERLYKLT…VFQYLGKAGL (632 aa)) constitute a Vitellogenin domain. A disulfide bridge links Cys-174 with Cys-194.

As to quaternary structure, heterodimer; heterodimerizes with the protein disulfide isomerase (P4HB/PDI). Interacts with APOB. Interacts with PRAP1.

The protein resides in the endoplasmic reticulum. It is found in the golgi apparatus. It catalyses the reaction a 1,2-diacyl-sn-glycero-3-phosphocholine(in) = a 1,2-diacyl-sn-glycero-3-phosphocholine(out). It carries out the reaction a 1,2-diacyl-sn-glycero-3-phosphoethanolamine(in) = a 1,2-diacyl-sn-glycero-3-phosphoethanolamine(out). The catalysed reaction is a cholesterol ester(in) = a cholesterol ester(out). The enzyme catalyses a triacyl-sn-glycerol(in) = a triacyl-sn-glycerol(out). Catalyzes the transport of triglyceride, cholesteryl ester, and phospholipid between phospholipid surfaces. Required for the assembly and secretion of plasma lipoproteins that contain apolipoprotein B. May be involved in regulating cholesteryl ester biosynthesis in cells that produce lipoproteins. The sequence is that of Microsomal triglyceride transfer protein large subunit (MTTP) from Mesocricetus auratus (Golden hamster).